Here is a 182-residue protein sequence, read N- to C-terminus: Protein GrpE (182 aa).

Belongs to the GrpE family. As to quaternary structure, homodimer.

It is found in the cytoplasm. Participates actively in the response to hyperosmotic and heat shock by preventing the aggregation of stress-denatured proteins, in association with DnaK and GrpE. It is the nucleotide exchange factor for DnaK and may function as a thermosensor. Unfolded proteins bind initially to DnaJ; upon interaction with the DnaJ-bound protein, DnaK hydrolyzes its bound ATP, resulting in the formation of a stable complex. GrpE releases ADP from DnaK; ATP binding to DnaK triggers the release of the substrate protein, thus completing the reaction cycle. Several rounds of ATP-dependent interactions between DnaJ, DnaK and GrpE are required for fully efficient folding. The sequence is that of Protein GrpE from Aquifex aeolicus (strain VF5).